A 666-amino-acid polypeptide reads, in one-letter code: Adenylylsulfate reductase subunit alpha (666 aa).

Residues 32–35 (GGMG), 60–61 (DK), 67–69 (SGA), Asn78, Ile193, Ser259, Ser417, 461–462 (AD), and Ser472 each bind FAD.

Belongs to the FAD-dependent oxidoreductase 2 family. Heterodimer composed of AprA and AprB. The heterodimers can dimerize to form heterotetramers. FAD serves as cofactor.

The protein localises to the cytoplasm. The enzyme catalyses sulfite + A + AMP + 2 H(+) = adenosine 5'-phosphosulfate + AH2. In terms of biological role, catalytic subunit of the adenylylsulfate reductase which catalyzes reversibly the reduction of adenosine 5'-phosphosulfate (APS) to sulfite and AMP during dissimilatory sulfate reduction. The sequence is that of Adenylylsulfate reductase subunit alpha from Megalodesulfovibrio gigas (strain ATCC 19364 / DSM 1382 / NCIMB 9332 / VKM B-1759) (Desulfovibrio gigas).